A 537-amino-acid polypeptide reads, in one-letter code: Cryptic loci regulator 2 (537 aa).

Residues 96-116 are disordered; it reads VSARHVRPNPKSSKDTLEKQP. Positions 107–116 are enriched in basic and acidic residues; the sequence is SSKDTLEKQP.

In terms of assembly, interacts with clr3.

The protein resides in the nucleus. It localises to the chromosome. It is found in the centromere. The protein localises to the telomere. In terms of biological role, required for deacetylation in the mating-type region and the centromere. Acts upstream of the histone deacetylases to promote transcriptional silencing. Required for proper positioning of nucleosomes at heterochromatic loci and for transcriptional gene silencing (TGS) function of the Snf2/Hdac-containing repressor complex (SHREC). The chain is Cryptic loci regulator 2 (clr2) from Schizosaccharomyces pombe (strain 972 / ATCC 24843) (Fission yeast).